The sequence spans 211 residues: RING finger protein narya (211 aa).

An RING-type zinc finger spans residues 6–47; the sequence is CNKCFRHRKTDPAVPFHLTQCRHVICGPCLGQSSLEKNCPLC. Residues 149 to 211 are disordered; sequence RRRHSAGERF…FGSDTKGFRL (63 aa). The segment covering 153 to 165 has biased composition (basic and acidic residues); sequence SAGERFHTPEFKE. The span at 172–184 shows a compositional bias: low complexity; it reads STSDKSPSDMPSD.

May interact with itself, with nenya and vilya through its RING-type zinc finger. As to expression, expressed in nurse cell and pro-oocytes (at protein level).

It localises to the chromosome. Functionally, required for the formation of DNA double-strand breaks (DSBs) together with nenya and vilya during the meiotic recombination process. Plays a role in DSBs processing into crossovers. Plays a redundant role with nenya in chromosome segregation during female meiosis. The polypeptide is RING finger protein narya (Drosophila melanogaster (Fruit fly)).